The chain runs to 483 residues: Glutamyl-tRNA(Gln) amidotransferase subunit A (483 aa).

Residues Lys-76 and Ser-151 each act as charge relay system in the active site. Residue Ser-175 is the Acyl-ester intermediate of the active site.

This sequence belongs to the amidase family. GatA subfamily. As to quaternary structure, heterotrimer of A, B and C subunits.

It catalyses the reaction L-glutamyl-tRNA(Gln) + L-glutamine + ATP + H2O = L-glutaminyl-tRNA(Gln) + L-glutamate + ADP + phosphate + H(+). Allows the formation of correctly charged Gln-tRNA(Gln) through the transamidation of misacylated Glu-tRNA(Gln) in organisms which lack glutaminyl-tRNA synthetase. The reaction takes place in the presence of glutamine and ATP through an activated gamma-phospho-Glu-tRNA(Gln). The sequence is that of Glutamyl-tRNA(Gln) amidotransferase subunit A from Pseudomonas putida (strain ATCC 47054 / DSM 6125 / CFBP 8728 / NCIMB 11950 / KT2440).